An 87-amino-acid polypeptide reads, in one-letter code: UPF0250 protein YPK_3025 (87 aa).

This sequence belongs to the UPF0250 family.

This chain is UPF0250 protein YPK_3025, found in Yersinia pseudotuberculosis serotype O:3 (strain YPIII).